A 646-amino-acid chain; its full sequence is Aquaglycerol porin AQY3 (646 aa).

A compositionally biased stretch (low complexity) spans 1–14; it reads MSYESGRSSSSSES. 2 disordered regions span residues 1–68 and 175–262; these read MSYE…SRNK and KNMD…KKRT. The Cytoplasmic portion of the chain corresponds to 1–350; it reads MSYESGRSSS…AKIRYHMREP (350 aa). The segment covering 19–41 has biased composition (basic and acidic residues); that stretch reads TLKEEPNGKIAWEESVKKSRENN. Positions 190 to 201 are enriched in polar residues; that stretch reads TDISRGGSTTSV. The chain crosses the membrane as a helical span at residues 351 to 371; sequence FAEFLGTLVLVIFGVGGNLQA. At 372–383 the chain is on the extracellular side; that stretch reads TVTKGSGGSYES. Residues 384–404 form a helical membrane-spanning segment; the sequence is LSFAWGFGCMLGVYVAGGISG. At 405–427 the chain is on the cytoplasmic side; that stretch reads GHINPAVTISMAIFRKFPWKKVP. The NPA 1 motif lies at 408-410; sequence NPA. A helical membrane pass occupies residues 428-448; the sequence is VYIVAQIIGAYFGGAMAYGYF. Residues 449–481 are Extracellular-facing; the sequence is WSSITEFEGGPHIRTTATGACLFTDPKSYVTWR. A helical transmembrane segment spans residues 482-502; sequence NAFFDEFIGASILVGCLMALL. Residues 503–509 are Cytoplasmic-facing; the sequence is DDSNAPP. A helical transmembrane segment spans residues 510 to 530; sequence GNGMTALIIGFLVAAIGMALG. Over 531 to 569 the chain is Extracellular; sequence YQTSFTINPARDLGPRIFASMIGYGPHAFHLTHWWWTWG. Residues 538–540 carry the NPA 2 motif; sequence NPA. Residues 570 to 590 traverse the membrane as a helical segment; the sequence is AWGGPIAGGIAGALIYDIFIF. Topologically, residues 591-646 are cytoplasmic; the sequence is TGCESPVNYPDNGYIENRVGKLLHAEFHQNDGTVSDESGVNSNSNTGSKKSVPTSS. Positions 621 to 646 are disordered; that stretch reads DGTVSDESGVNSNSNTGSKKSVPTSS.

This sequence belongs to the MIP/aquaporin (TC 1.A.8) family.

The protein resides in the cell membrane. It carries out the reaction glycerol(in) = glycerol(out). In terms of biological role, channel protein that mediates glycerol entry under ethanol stimulation. Does not seem to mediate glycerol uptake under standard conditions. The protein is Aquaglycerol porin AQY3 of Saccharomyces cerevisiae (strain ATCC 204508 / S288c) (Baker's yeast).